We begin with the raw amino-acid sequence, 201 residues long: Superoxide dismutase [Mn] (201 aa).

4 residues coordinate Mn(2+): His-27, His-81, Asp-163, and His-167.

The protein belongs to the iron/manganese superoxide dismutase family. Homodimer. Mn(2+) is required as a cofactor.

The protein resides in the secreted. It carries out the reaction 2 superoxide + 2 H(+) = H2O2 + O2. Destroys superoxide anion radicals which are normally produced within the cells and which are toxic to biological systems. The protein is Superoxide dismutase [Mn] (sodA) of Streptococcus pyogenes.